The primary structure comprises 581 residues: Fibrous sheath-interacting protein 1 (581 aa).

The tract at residues 1 to 77 (MDIIKGNLDG…SNDDKQESCS (77 aa)) is disordered. A compositionally biased stretch (polar residues) spans 14–30 (PASNSRIRPGSRSSNAS). Residues 52–77 (GKEDHSESSNTENRRTSNDDKQESCS) show a composition bias toward basic and acidic residues. Phosphoserine is present on Ser-87. Residues 105-153 (EPKLKELDSQLQDAIQKMKKLDKILAKKQRREKEIKKQGLEMRIKLWEE) are a coiled coil. Disordered regions lie at residues 338-365 (SSFSPRLENRNNQKPDRDGERNMEVTPG) and 555-581 (HLKLSSPENTIADEQETKDAAEECKEP). Composition is skewed to basic and acidic residues over residues 344–360 (LENRNNQKPDRDGERNM) and 569–581 (QETKDAAEECKEP).

The protein belongs to the FSIP1 family.

This is Fibrous sheath-interacting protein 1 (FSIP1) from Homo sapiens (Human).